Consider the following 732-residue polypeptide: Elongation factor 2 (732 aa).

Residues 19–260 (ERIRNMGIAA…MVVKHLPNPL (242 aa)) enclose the tr-type G domain. GTP is bound by residues 28-35 (AHIDHGKT), 94-98 (DTPGH), and 148-151 (NKVD). His-597 carries the post-translational modification Diphthamide.

It belongs to the TRAFAC class translation factor GTPase superfamily. Classic translation factor GTPase family. EF-G/EF-2 subfamily.

The protein resides in the cytoplasm. In terms of biological role, catalyzes the GTP-dependent ribosomal translocation step during translation elongation. During this step, the ribosome changes from the pre-translocational (PRE) to the post-translocational (POST) state as the newly formed A-site-bound peptidyl-tRNA and P-site-bound deacylated tRNA move to the P and E sites, respectively. Catalyzes the coordinated movement of the two tRNA molecules, the mRNA and conformational changes in the ribosome. The protein is Elongation factor 2 of Thermococcus kodakarensis (strain ATCC BAA-918 / JCM 12380 / KOD1) (Pyrococcus kodakaraensis (strain KOD1)).